The chain runs to 315 residues: MQCNDVQATEPDIKVSLTRVGVTNLKKLVKLKRKNKRDIVLLPTFEVFVDLPSSQKGIHMSRSPEVIEEVVENILLEKEIYGVEDLSVEIVMKLFEKHEYATRAEVMLYSDYMMEEKSPVTKKDSQEIGKIIARAYGVKDSNGKIDVKKMVGAEVVGITACPCAQNMLKENAVVSLTEKGFSSEDIEKILDSVTIATHNQRGIGTVMIEVPNGYTVGISKIIKIIKDSMSGEVYELLKRSDEAFVVEAAHKNPKFVEDCAREMIKRVVDVFDYLPEDTQVLVRQVNKESIHRHDAFAERNSTIRELRDELKTLTN.

The protein belongs to the GTP cyclohydrolase IV family. Homodimer. The cofactor is Fe(2+).

The enzyme catalyses GTP + H2O = 7,8-dihydroneopterin 2',3'-cyclic phosphate + formate + diphosphate + H(+). Its pathway is cofactor biosynthesis; 5,6,7,8-tetrahydromethanopterin biosynthesis. Converts GTP to 7,8-dihydro-D-neopterin 2',3'-cyclic phosphate, the first intermediate in the biosynthesis of coenzyme methanopterin. The protein is GTP cyclohydrolase MptA of Methanococcus maripaludis (strain DSM 14266 / JCM 13030 / NBRC 101832 / S2 / LL).